The primary structure comprises 508 residues: Histidine ammonia-lyase (508 aa).

The 5-imidazolinone (Ala-Gly) cross-link spans 143–145 (ASG). 2,3-didehydroalanine (Ser) is present on Ser144.

The protein belongs to the PAL/histidase family. Post-translationally, contains an active site 4-methylidene-imidazol-5-one (MIO), which is formed autocatalytically by cyclization and dehydration of residues Ala-Ser-Gly.

Its subcellular location is the cytoplasm. The catalysed reaction is L-histidine = trans-urocanate + NH4(+). The protein operates within amino-acid degradation; L-histidine degradation into L-glutamate; N-formimidoyl-L-glutamate from L-histidine: step 1/3. The protein is Histidine ammonia-lyase of Anaeromyxobacter sp. (strain K).